Reading from the N-terminus, the 448-residue chain is Phosphoglucosamine mutase (448 aa).

Ser-100 serves as the catalytic Phosphoserine intermediate. The Mg(2+) site is built by Ser-100, Asp-240, Asp-242, and Asp-244. Ser-100 is subject to Phosphoserine.

The protein belongs to the phosphohexose mutase family. It depends on Mg(2+) as a cofactor. Post-translationally, activated by phosphorylation.

The catalysed reaction is alpha-D-glucosamine 1-phosphate = D-glucosamine 6-phosphate. Its function is as follows. Catalyzes the conversion of glucosamine-6-phosphate to glucosamine-1-phosphate. The protein is Phosphoglucosamine mutase of Clostridium perfringens (strain SM101 / Type A).